The primary structure comprises 487 residues: Phenylalanine--tRNA ligase alpha subunit (487 aa).

L-phenylalanine contacts are provided by residues Thr-319, 361–363, and Tyr-401; that span reads QVE. Glu-403 lines the Mg(2+) pocket. Phe-427 contacts L-phenylalanine.

It belongs to the class-II aminoacyl-tRNA synthetase family. Phe-tRNA synthetase alpha subunit type 2 subfamily. In terms of assembly, tetramer of two alpha and two beta subunits. It depends on Mg(2+) as a cofactor.

Its subcellular location is the cytoplasm. It catalyses the reaction tRNA(Phe) + L-phenylalanine + ATP = L-phenylalanyl-tRNA(Phe) + AMP + diphosphate + H(+). The protein is Phenylalanine--tRNA ligase alpha subunit (phesA) of Dictyostelium discoideum (Social amoeba).